The sequence spans 119 residues: Phosphoribosyl-AMP cyclohydrolase (119 aa).

D77 contacts Mg(2+). C78 lines the Zn(2+) pocket. Mg(2+)-binding residues include D79 and D81. Zn(2+) is bound by residues C94 and C101.

It belongs to the PRA-CH family. As to quaternary structure, homodimer. Requires Mg(2+) as cofactor. Zn(2+) serves as cofactor.

The protein localises to the cytoplasm. The catalysed reaction is 1-(5-phospho-beta-D-ribosyl)-5'-AMP + H2O = 1-(5-phospho-beta-D-ribosyl)-5-[(5-phospho-beta-D-ribosylamino)methylideneamino]imidazole-4-carboxamide. It functions in the pathway amino-acid biosynthesis; L-histidine biosynthesis; L-histidine from 5-phospho-alpha-D-ribose 1-diphosphate: step 3/9. Catalyzes the hydrolysis of the adenine ring of phosphoribosyl-AMP. This chain is Phosphoribosyl-AMP cyclohydrolase, found in Cereibacter sphaeroides (strain KD131 / KCTC 12085) (Rhodobacter sphaeroides).